A 150-amino-acid chain; its full sequence is Ribonuclease H (150 aa).

Residues 1 to 141 (MKSIEVHTDG…VDVLARNQAI (141 aa)) enclose the RNase H type-1 domain. Residues Asp9, Glu47, Asp69, and Asp133 each coordinate Mg(2+).

It belongs to the RNase H family. In terms of assembly, monomer. Requires Mg(2+) as cofactor.

The protein localises to the cytoplasm. The catalysed reaction is Endonucleolytic cleavage to 5'-phosphomonoester.. Its function is as follows. Endonuclease that specifically degrades the RNA of RNA-DNA hybrids. This Xanthomonas campestris pv. campestris (strain 8004) protein is Ribonuclease H.